We begin with the raw amino-acid sequence, 890 residues long: Protein translocase subunit SecA (890 aa).

Residues Gln85, 103–107 (GEGKT), and Asp491 each bind ATP.

This sequence belongs to the SecA family. In terms of assembly, monomer and homodimer. Part of the essential Sec protein translocation apparatus which comprises SecA, SecYEG and auxiliary proteins SecDF. Other proteins may also be involved.

The protein localises to the cell membrane. It is found in the cytoplasm. The enzyme catalyses ATP + H2O + cellular proteinSide 1 = ADP + phosphate + cellular proteinSide 2.. Functionally, part of the Sec protein translocase complex. Interacts with the SecYEG preprotein conducting channel. Has a central role in coupling the hydrolysis of ATP to the transfer of proteins into and across the cell membrane, serving as an ATP-driven molecular motor driving the stepwise translocation of polypeptide chains across the membrane. The chain is Protein translocase subunit SecA from Mycoplasmoides gallisepticum (strain R(low / passage 15 / clone 2)) (Mycoplasma gallisepticum).